Here is a 137-residue protein sequence, read N- to C-terminus: MSIIKEFREFAMRGNVVDLAVGVIIGAAFGKIVSSLVADIIMPPLGLLIGGIDFKQFAVTLREAQGDIPAVVMHYGVFIQNVFDFLIVAFAIFMAIKLINKLNRKKEEPAAATPAPTKEEVLLTEIRDLLKEQNNRS.

Helical transmembrane passes span 10 to 30 (FAMRGNVVDLAVGVIIGAAFG) and 76 to 96 (GVFIQNVFDFLIVAFAIFMAI).

It belongs to the MscL family. Homopentamer.

The protein localises to the cell inner membrane. Its function is as follows. Channel that opens in response to stretch forces in the membrane lipid bilayer. May participate in the regulation of osmotic pressure changes within the cell. This Escherichia coli O45:K1 (strain S88 / ExPEC) protein is Large-conductance mechanosensitive channel.